Consider the following 227-residue polypeptide: GTP:AMP phosphotransferase AK3, mitochondrial (227 aa).

5 residues coordinate GTP: G17, G19, K20, G21, and T22. K20 bears the N6-succinyllysine mark. The residue at position 34 (K34) is an N6-acetyllysine. Phosphoserine is present on S37. Residues 37-66 (SSGDLLRDNMLRGTEIGVLAKAFIDQGKLI) form an NMP region. AMP is bound by residues S38 and R43. K57 carries the N6-succinyllysine modification. K64 contacts AMP. N6-acetyllysine; alternate is present on residues K64 and K80. N6-succinyllysine; alternate occurs at positions 64 and 80. AMP contacts are provided by G91, R94, and Q98. The interval 127–164 (ARWIHPASGRVYNIEFNPPKTVGIDDLTGEPLIQREDD) is LID. 5 residues coordinate GTP: R128, Y138, N139, R161, and R172. Residues K174 and K189 each carry the N6-acetyllysine; alternate modification. N6-succinyllysine; alternate is present on residues K174 and K189. T201 is a binding site for GTP. Position 203 is an N6-acetyllysine (K203).

The protein belongs to the adenylate kinase family. AK3 subfamily. As to quaternary structure, monomer.

It is found in the mitochondrion matrix. It carries out the reaction a ribonucleoside 5'-triphosphate + AMP = a ribonucleoside 5'-diphosphate + ADP. The catalysed reaction is GTP + AMP = GDP + ADP. The enzyme catalyses ITP + AMP = IDP + ADP. Its function is as follows. Mitochondrial adenylate kinase with a specific GTP:AMP phosphotransferase activity. Could also use ITP as phosphate donor. Its physiological function is to recycle GTP into GDP which is necessary for the TCA cycle in the mitochondrial matrix. The chain is GTP:AMP phosphotransferase AK3, mitochondrial from Pongo abelii (Sumatran orangutan).